Consider the following 1405-residue polypeptide: Centlein (1405 aa).

Positions Met1–Pro14 are enriched in pro residues. The segment at Met1 to Leu79 is disordered. Ala2 carries the post-translational modification N-acetylalanine. 2 positions are modified to phosphoserine: Ser5 and Ser22. The span at Val48 to Val58 shows a compositional bias: basic and acidic residues. The segment covering Glu61 to Gly71 has biased composition (gly residues). Residues Glu95–Val126 are a coiled coil. Disordered stretches follow at residues Lys421–His450 and Ser493–Gln529. 2 coiled-coil regions span residues Asn613 to Arg655 and Lys681 to Asn793. The segment at Trp865–Lys917 is disordered. Residues Ala877–Ser895 are compositionally biased toward polar residues. Over residues Pro896–Asp907 the composition is skewed to basic and acidic residues. Residues Asn980–Asn1311 adopt a coiled-coil conformation. Position 1343 is a phosphothreonine (Thr1343).

As to quaternary structure, interacts with CEP250 and CEP68. Interacts with NEK2; the interaction leads to phosphorylation of CNTLN. Phosphorylated directly or indirectly by NEK2.

The protein localises to the cytoplasm. The protein resides in the cytoskeleton. It localises to the microtubule organizing center. It is found in the centrosome. Its subcellular location is the centriole. Its function is as follows. Required for centrosome cohesion and recruitment of CEP68 to centrosomes. This Homo sapiens (Human) protein is Centlein (CNTLN).